A 445-amino-acid polypeptide reads, in one-letter code: DNA repair protein RadA (445 aa).

The segment at 10–27 (CSNCANISNKWSGQCFDC) adopts a C4-type zinc-finger fold. ATP is bound at residue 90 to 97 (GEPGIGKS). The RadA KNRFG motif motif lies at 249 to 253 (KNRFG). The interval 348–445 (EIYLSIAGGL…HLQELKEIIK (98 aa)) is lon-protease-like.

Belongs to the RecA family. RadA subfamily.

In terms of biological role, DNA-dependent ATPase involved in processing of recombination intermediates, plays a role in repairing DNA breaks. Stimulates the branch migration of RecA-mediated strand transfer reactions, allowing the 3' invading strand to extend heteroduplex DNA faster. Binds ssDNA in the presence of ADP but not other nucleotides, has ATPase activity that is stimulated by ssDNA and various branched DNA structures, but inhibited by SSB. Does not have RecA's homology-searching function. This chain is DNA repair protein RadA, found in Rickettsia prowazekii (strain Madrid E).